A 479-amino-acid chain; its full sequence is Monodehydroascorbate reductase 1, peroxisomal (479 aa).

Residues 1–3 (MGR) are Cytoplasmic-facing. Residues 4–24 (AFEYVILGGGVAAGYAALEFV) traverse the membrane as a helical segment. FAD is bound by residues 12–15 (GGVA), glutamate 41, arginine 48, lysine 53, and 147–148 (RN). Topologically, residues 25-445 (RRNGGASSQE…QATGGGGKPT (421 aa)) are peroxisomal. Residues 172–178 (GGYIGME), arginine 202, and glycine 260 each bind NAD(+). NADP(+) is bound by residues 174–178 (YIGME), arginine 202, and glycine 260. Residue aspartate 297 coordinates FAD. Residue 314–315 (EH) participates in NAD(+) binding. 314–315 (EH) lines the NADP(+) pocket. Valine 316 lines the FAD pocket. Residue arginine 320 participates in L-ascorbate binding. Tyrosine 347 contributes to the FAD binding site. Tyrosine 347 is an NAD(+) binding site. Tyrosine 347 serves as a coordination point for NADP(+). Arginine 349 lines the L-ascorbate pocket. A helical transmembrane segment spans residues 446 to 466 (CAWHATVGVAAAVSIAAFACW). Residues 467-479 (YGWQAPYVLKRDF) are Cytoplasmic-facing.

Belongs to the FAD-dependent oxidoreductase family. The cofactor is FAD.

It localises to the peroxisome membrane. The catalysed reaction is 2 monodehydro-L-ascorbate radical + NADH + H(+) = 2 L-ascorbate + NAD(+). Its function is as follows. Catalyzes the conversion of monodehydroascorbate to ascorbate, oxidizing NADH in the process. Ascorbate is a major antioxidant against reactive oxygen species (ROS) and nitric oxide (NO). The polypeptide is Monodehydroascorbate reductase 1, peroxisomal (Oryza sativa subsp. japonica (Rice)).